The sequence spans 314 residues: Methionyl-tRNA formyltransferase (314 aa).

110-113 (SLLP) is a binding site for (6S)-5,6,7,8-tetrahydrofolate.

Belongs to the Fmt family.

The catalysed reaction is L-methionyl-tRNA(fMet) + (6R)-10-formyltetrahydrofolate = N-formyl-L-methionyl-tRNA(fMet) + (6S)-5,6,7,8-tetrahydrofolate + H(+). Attaches a formyl group to the free amino group of methionyl-tRNA(fMet). The formyl group appears to play a dual role in the initiator identity of N-formylmethionyl-tRNA by promoting its recognition by IF2 and preventing the misappropriation of this tRNA by the elongation apparatus. The sequence is that of Methionyl-tRNA formyltransferase from Levilactobacillus brevis (strain ATCC 367 / BCRC 12310 / CIP 105137 / JCM 1170 / LMG 11437 / NCIMB 947 / NCTC 947) (Lactobacillus brevis).